The following is a 177-amino-acid chain: Large ribosomal subunit protein uL6 (177 aa).

The protein belongs to the universal ribosomal protein uL6 family. Part of the 50S ribosomal subunit.

Functionally, this protein binds to the 23S rRNA, and is important in its secondary structure. It is located near the subunit interface in the base of the L7/L12 stalk, and near the tRNA binding site of the peptidyltransferase center. In Cupriavidus metallidurans (strain ATCC 43123 / DSM 2839 / NBRC 102507 / CH34) (Ralstonia metallidurans), this protein is Large ribosomal subunit protein uL6.